The primary structure comprises 295 residues: Glycine--tRNA ligase alpha subunit (295 aa).

Belongs to the class-II aminoacyl-tRNA synthetase family. As to quaternary structure, tetramer of two alpha and two beta subunits.

Its subcellular location is the cytoplasm. It catalyses the reaction tRNA(Gly) + glycine + ATP = glycyl-tRNA(Gly) + AMP + diphosphate. The chain is Glycine--tRNA ligase alpha subunit from Thermosynechococcus vestitus (strain NIES-2133 / IAM M-273 / BP-1).